A 173-amino-acid polypeptide reads, in one-letter code: Crossover junction endodeoxyribonuclease RuvC (173 aa).

Catalysis depends on residues Asp-8, Glu-67, and Asp-139. Mg(2+)-binding residues include Asp-8, Glu-67, and Asp-139.

The protein belongs to the RuvC family. As to quaternary structure, homodimer which binds Holliday junction (HJ) DNA. The HJ becomes 2-fold symmetrical on binding to RuvC with unstacked arms; it has a different conformation from HJ DNA in complex with RuvA. In the full resolvosome a probable DNA-RuvA(4)-RuvB(12)-RuvC(2) complex forms which resolves the HJ. The cofactor is Mg(2+).

It is found in the cytoplasm. The enzyme catalyses Endonucleolytic cleavage at a junction such as a reciprocal single-stranded crossover between two homologous DNA duplexes (Holliday junction).. In terms of biological role, the RuvA-RuvB-RuvC complex processes Holliday junction (HJ) DNA during genetic recombination and DNA repair. Endonuclease that resolves HJ intermediates. Cleaves cruciform DNA by making single-stranded nicks across the HJ at symmetrical positions within the homologous arms, yielding a 5'-phosphate and a 3'-hydroxyl group; requires a central core of homology in the junction. The consensus cleavage sequence is 5'-(A/T)TT(C/G)-3'. Cleavage occurs on the 3'-side of the TT dinucleotide at the point of strand exchange. HJ branch migration catalyzed by RuvA-RuvB allows RuvC to scan DNA until it finds its consensus sequence, where it cleaves and resolves the cruciform DNA. This Shewanella putrefaciens (strain CN-32 / ATCC BAA-453) protein is Crossover junction endodeoxyribonuclease RuvC.